We begin with the raw amino-acid sequence, 167 residues long: Urease accessory protein UreE (167 aa).

The tract at residues 135–167 (SGAYGGGHHHSHSHHEGDEFHSKPRLHHFGGSQ) is disordered. The segment covering 157 to 167 (KPRLHHFGGSQ) has biased composition (basic residues).

This sequence belongs to the UreE family.

The protein resides in the cytoplasm. Its function is as follows. Involved in urease metallocenter assembly. Binds nickel. Probably functions as a nickel donor during metallocenter assembly. The sequence is that of Urease accessory protein UreE from Nitrosococcus oceani (strain ATCC 19707 / BCRC 17464 / JCM 30415 / NCIMB 11848 / C-107).